The following is a 295-amino-acid chain: Acetylglutamate kinase (295 aa).

Substrate-binding positions include 66–67 (GG), Arg-88, and Asn-193.

The protein belongs to the acetylglutamate kinase family. ArgB subfamily.

The protein localises to the cytoplasm. It catalyses the reaction N-acetyl-L-glutamate + ATP = N-acetyl-L-glutamyl 5-phosphate + ADP. It participates in amino-acid biosynthesis; L-arginine biosynthesis; N(2)-acetyl-L-ornithine from L-glutamate: step 2/4. Its function is as follows. Catalyzes the ATP-dependent phosphorylation of N-acetyl-L-glutamate. This chain is Acetylglutamate kinase, found in Bradyrhizobium diazoefficiens (strain JCM 10833 / BCRC 13528 / IAM 13628 / NBRC 14792 / USDA 110).